A 161-amino-acid chain; its full sequence is Cytochrome c-type biogenesis protein CcmE (161 aa).

At methionine 1–arginine 8 the chain is on the cytoplasmic side. A helical; Signal-anchor for type II membrane protein membrane pass occupies residues leucine 9–alanine 29. Topologically, residues leucine 30 to glutamine 161 are periplasmic. The heme site is built by histidine 129 and tyrosine 133. A disordered region spans residues methionine 142–glutamine 161. Residues tyrosine 151 to glutamine 161 show a composition bias toward polar residues.

It belongs to the CcmE/CycJ family.

The protein resides in the cell inner membrane. In terms of biological role, heme chaperone required for the biogenesis of c-type cytochromes. Transiently binds heme delivered by CcmC and transfers the heme to apo-cytochromes in a process facilitated by CcmF and CcmH. The protein is Cytochrome c-type biogenesis protein CcmE of Aliivibrio fischeri (strain ATCC 700601 / ES114) (Vibrio fischeri).